Here is a 38-residue protein sequence, read N- to C-terminus: Photosystem II reaction center protein X (38 aa).

A helical transmembrane segment spans residues 8-28; the sequence is FLWSLVAGAVVLGALFGAIIF.

Belongs to the PsbX family. Type 1 subfamily. In terms of assembly, PSII is composed of 1 copy each of membrane proteins PsbA, PsbB, PsbC, PsbD, PsbE, PsbF, PsbH, PsbI, PsbJ, PsbK, PsbL, PsbM, PsbT, PsbX, PsbY, PsbZ, Psb30/Ycf12, peripheral proteins PsbO, CyanoQ (PsbQ), PsbU, PsbV and a large number of cofactors. It forms dimeric complexes.

The protein localises to the cellular thylakoid membrane. Involved in the binding and/or turnover of quinones at the Q(B) site of photosystem II (PSII). PSII is a light-driven water plastoquinone oxidoreductase, using light energy to abstract electrons from H(2)O, generating a proton gradient subsequently used for ATP formation. The protein is Photosystem II reaction center protein X of Synechococcus sp. (strain JA-2-3B'a(2-13)) (Cyanobacteria bacterium Yellowstone B-Prime).